Reading from the N-terminus, the 373-residue chain is Opsin Rh1 (373 aa).

Residues 1 to 54 (MDSFAAVATQLGPHFAALSNGSVVDKVTPDMAHLISPYWNQFPAMDPIWAKILT) lie on the Extracellular side of the membrane. N-linked (GlcNAc...) asparagine glycosylation occurs at N20. A helical transmembrane segment spans residues 55 to 75 (AYMIIIGMISWCGNGVVIYIF). Topologically, residues 76-86 (ATTKSLRTPAN) are cytoplasmic. The chain crosses the membrane as a helical span at residues 87-107 (LLVINLAISDFGIMITNTPMM). The Extracellular segment spans residues 108 to 124 (GINLYFETWVLGPMMCD). A disulfide bond links C123 and C200. A helical membrane pass occupies residues 125–145 (IYAGLGSAFGCSSIWSMCMIS). Residues 146-162 (LDRYQVIVKGMAGRPMT) are Cytoplasmic-facing. A helical membrane pass occupies residues 163 to 183 (IPLALGKIAYIWFMSSIWCLA). Over 184–219 (PVFGWSRYVPEGNLTSCGIDYLERDWNPRSYLIFYS) the chain is Extracellular. N-linked (GlcNAc...) asparagine glycosylation is present at N196. The helical transmembrane segment at 220–240 (IFVYYIPLFLICYSYWFIIAA) threads the bilayer. Topologically, residues 241-276 (VSAHEKAMREQAKKMNVKSLRSSEDADKSAEGKLAK) are cytoplasmic. Residues 277-297 (VALVTISLWFMAWTPYLVINC) form a helical membrane-spanning segment. At 298-308 (MGLFKFEGLTP) the chain is on the extracellular side. Residues 309–331 (LNTIWGACFAKSAACYNPIVYGI) form a helical membrane-spanning segment. At K319 the chain carries N6-(retinylidene)lysine. At 332–373 (SHPKYRLALKEKCPCCVFGKVDDGKSSEAQSQATNSEAESKA) the chain is on the cytoplasmic side. Positions 354 to 373 (DGKSSEAQSQATNSEAESKA) are disordered. Residues 358 to 373 (SEAQSQATNSEAESKA) are compositionally biased toward polar residues.

It belongs to the G-protein coupled receptor 1 family. Opsin subfamily. In terms of processing, phosphorylated on some or all of the serine and threonine residues present in the C-terminal region.

Its subcellular location is the cell projection. It localises to the rhabdomere membrane. In terms of biological role, visual pigments are the light-absorbing molecules that mediate vision. They consist of an apoprotein, opsin, covalently linked to cis-retinal. This is Opsin Rh1 (ninaE) from Drosophila pseudoobscura pseudoobscura (Fruit fly).